We begin with the raw amino-acid sequence, 313 residues long: Putative S-adenosyl-L-methionine-dependent methyltransferase MAV_5150 (313 aa).

S-adenosyl-L-methionine contacts are provided by residues aspartate 139 and 168–169 (DL).

It belongs to the UPF0677 family.

Its function is as follows. Exhibits S-adenosyl-L-methionine-dependent methyltransferase activity. In Mycobacterium avium (strain 104), this protein is Putative S-adenosyl-L-methionine-dependent methyltransferase MAV_5150.